The sequence spans 79 residues: D-alanyl carrier protein (79 aa).

Residues 2-79 (AEFKEQVLDI…MVIKKLEEIR (78 aa)) form the Carrier domain. Ser-37 is subject to O-(pantetheine 4'-phosphoryl)serine.

This sequence belongs to the DltC family. In terms of processing, 4'-phosphopantetheine is transferred from CoA to a specific serine of apo-DCP.

The protein localises to the cytoplasm. The protein operates within cell wall biogenesis; lipoteichoic acid biosynthesis. In terms of biological role, carrier protein involved in the D-alanylation of lipoteichoic acid (LTA). The loading of thioester-linked D-alanine onto DltC is catalyzed by D-alanine--D-alanyl carrier protein ligase DltA. The DltC-carried D-alanyl group is further transferred to cell membrane phosphatidylglycerol (PG) by forming an ester bond, probably catalyzed by DltD. D-alanylation of LTA plays an important role in modulating the properties of the cell wall in Gram-positive bacteria, influencing the net charge of the cell wall. This Bacillus mycoides (strain KBAB4) (Bacillus weihenstephanensis) protein is D-alanyl carrier protein.